The following is a 157-amino-acid chain: Putative electron transport protein YsaA (157 aa).

4Fe-4S ferredoxin-type domains follow at residues 2-32 (NRFI…NQDC), 48-80 (KDHC…REHG), 80-109 (GHIF…VVSS), and 112-144 (KARA…CMDV). [4Fe-4S] cluster is bound by residues cysteine 12, cysteine 15, cysteine 18, cysteine 22, cysteine 58, cysteine 61, cysteine 66, cysteine 70, cysteine 89, cysteine 92, cysteine 95, cysteine 99, cysteine 118, cysteine 121, cysteine 130, and cysteine 134.

The protein is Putative electron transport protein YsaA (ysaA) of Escherichia coli (strain K12).